The chain runs to 219 residues: Transcription factor MYB23 (219 aa).

HTH myb-type domains are found at residues 9–61 (EHEY…MNYL) and 62–116 (SPNV…SKKL). 2 consecutive DNA-binding regions (H-T-H motif) follow at residues 37–61 (WNRIAKKTGLKRCGKSCRLRWMNYL) and 89–112 (WSLIAKRVPGRTDNQVKNYWNTHL).

Interacts with BHLH2/EGL3/MYC146, BHLH12/MYC1 and GL3. Expressed in roots, seed coats, leaves, stems and flowers. Detected specifically in trichomes, and in the cell division and differentiation zone of the root.

The protein resides in the nucleus. Functionally, transcription activator, when associated with BHLH2/EGL3/MYC146 or BHLH12/MYC1. Regulates the epidermal cell fate specification. Mediates the formation of columellae and accumulation of mucilages on seed coats. Controls the elongation of epidermal cells positively in roots but negatively in stems, leading to the promotion of primary roots elongation and repression of leaves and stems elongation, respectively. Ovoids ectopic root-hair formation, probably by inducing GL2 in roots. Controls trichome initiation and branching. The polypeptide is Transcription factor MYB23 (MYB23) (Arabidopsis thaliana (Mouse-ear cress)).